Here is a 154-residue protein sequence, read N- to C-terminus: Endoribonuclease YbeY (154 aa).

3 residues coordinate Zn(2+): histidine 115, histidine 119, and histidine 125.

This sequence belongs to the endoribonuclease YbeY family. Zn(2+) is required as a cofactor.

It localises to the cytoplasm. Single strand-specific metallo-endoribonuclease involved in late-stage 70S ribosome quality control and in maturation of the 3' terminus of the 16S rRNA. The sequence is that of Endoribonuclease YbeY from Halorhodospira halophila (strain DSM 244 / SL1) (Ectothiorhodospira halophila (strain DSM 244 / SL1)).